The chain runs to 570 residues: Set1/Ash2 histone methyltransferase complex subunit ash-2 (570 aa).

The PHD-type zinc finger occupies 19-76 (TTVCYCDGKRELGSVEVVCSTCLKWFHGRCLKEFHELNSNGVPFMICYTFTCKQCRPT). Residues 201-242 (NREPRHIELPPIEGPKTRGASKRRHAEAPVTGKKQKLAADYS) are disordered. A B30.2/SPRY domain is found at 270–468 (PNVPEDPAWN…TLVEMPGSYI (199 aa)).

In terms of assembly, component of the SET2 complex (also known as the SET1/COMPASS complex), which contains at least set-2, swd-2.1, cfp-1, rbbp-5, wdr-5.1, dpy-30 and ash-2. Within the complex, interacts with cfp-1 and wdr-5.1. As to expression, expressed in somatic and germline tissues (at protein level).

The protein resides in the nucleus. Component of the set-2/ash-2 histone methyltransferase (HMT) complex. Required for the di- and trimethylation at 'Lys-4' of histone H3, a mark associated with epigenetic transcriptional activation. Implicated in the epigenetic inheritance of lifespan over several generations. Functions as a transcriptional regulator. Acts in the germline to limit the longevity of the soma, probably by regulating a lipid metabolism pathway that signals from the germline to the intestine, thereby preventing accumulation of mono-unsaturated fatty acids. The sequence is that of Set1/Ash2 histone methyltransferase complex subunit ash-2 from Caenorhabditis elegans.